Reading from the N-terminus, the 165-residue chain is Cyclic pyranopterin monophosphate synthase (165 aa).

Residues 78–80 (LCH) and 116–117 (ME) contribute to the substrate site. D131 is an active-site residue.

This sequence belongs to the MoaC family. In terms of assembly, homohexamer; trimer of dimers.

The catalysed reaction is (8S)-3',8-cyclo-7,8-dihydroguanosine 5'-triphosphate = cyclic pyranopterin phosphate + diphosphate. The protein operates within cofactor biosynthesis; molybdopterin biosynthesis. Functionally, catalyzes the conversion of (8S)-3',8-cyclo-7,8-dihydroguanosine 5'-triphosphate to cyclic pyranopterin monophosphate (cPMP). This Sinorhizobium fredii (strain NBRC 101917 / NGR234) protein is Cyclic pyranopterin monophosphate synthase.